A 98-amino-acid polypeptide reads, in one-letter code: Integration host factor subunit alpha (98 aa).

This sequence belongs to the bacterial histone-like protein family. As to quaternary structure, heterodimer of an alpha and a beta chain.

Functionally, this protein is one of the two subunits of integration host factor, a specific DNA-binding protein that functions in genetic recombination as well as in transcriptional and translational control. This chain is Integration host factor subunit alpha, found in Marinomonas sp. (strain MWYL1).